The primary structure comprises 253 residues: Probable transcriptional regulatory protein RAF_ORF0717 (253 aa).

The tract at residues 1–21 (MAGHSKFKNIQHRKGAQDKKR) is disordered.

It belongs to the TACO1 family.

It is found in the cytoplasm. In Rickettsia africae (strain ESF-5), this protein is Probable transcriptional regulatory protein RAF_ORF0717.